The sequence spans 195 residues: MRTLVIASGNAGKIREFQGLLQHLPLNVQAQPQGFDVEETGSTFAANARIKATAVAAMAGSWALADDSGLSVNALGGAPGVHSARYAPTDPERIEKLLGALSNASERHAQFCAALCVAAPDGSVLIEVEGRCDGWITTTPRGDGGFGYDPIFEVSCTGLTFAQMPLTEKKSHGHRGKAFALLEPQLQDLLSAEPR.

Residue 8 to 13 (SGNAGK) participates in substrate binding. Residues E38 and D67 each contribute to the Mg(2+) site. D67 acts as the Proton acceptor in catalysis. Residues S68, 146–149 (FGYD), K169, and 174–175 (HR) each bind substrate.

It belongs to the HAM1 NTPase family. As to quaternary structure, homodimer. Requires Mg(2+) as cofactor.

It catalyses the reaction XTP + H2O = XMP + diphosphate + H(+). The enzyme catalyses dITP + H2O = dIMP + diphosphate + H(+). It carries out the reaction ITP + H2O = IMP + diphosphate + H(+). Functionally, pyrophosphatase that catalyzes the hydrolysis of nucleoside triphosphates to their monophosphate derivatives, with a high preference for the non-canonical purine nucleotides XTP (xanthosine triphosphate), dITP (deoxyinosine triphosphate) and ITP. Seems to function as a house-cleaning enzyme that removes non-canonical purine nucleotides from the nucleotide pool, thus preventing their incorporation into DNA/RNA and avoiding chromosomal lesions. This is dITP/XTP pyrophosphatase from Parasynechococcus marenigrum (strain WH8102).